The following is a 129-amino-acid chain: Glycine cleavage system H protein (129 aa).

A Lipoyl-binding domain is found at 24 to 106 (TYTVGITEHA…YAGGWIFKIK (83 aa)). Lys-65 carries the N6-lipoyllysine modification.

It belongs to the GcvH family. In terms of assembly, the glycine cleavage system is composed of four proteins: P, T, L and H. It depends on (R)-lipoate as a cofactor.

Its function is as follows. The glycine cleavage system catalyzes the degradation of glycine. The H protein shuttles the methylamine group of glycine from the P protein to the T protein. This chain is Glycine cleavage system H protein, found in Escherichia coli O45:K1 (strain S88 / ExPEC).